Here is a 200-residue protein sequence, read N- to C-terminus: 3-isopropylmalate dehydratase small subunit (200 aa).

It belongs to the LeuD family. LeuD type 1 subfamily. In terms of assembly, heterodimer of LeuC and LeuD.

It catalyses the reaction (2R,3S)-3-isopropylmalate = (2S)-2-isopropylmalate. It functions in the pathway amino-acid biosynthesis; L-leucine biosynthesis; L-leucine from 3-methyl-2-oxobutanoate: step 2/4. Functionally, catalyzes the isomerization between 2-isopropylmalate and 3-isopropylmalate, via the formation of 2-isopropylmaleate. The sequence is that of 3-isopropylmalate dehydratase small subunit from Vibrio parahaemolyticus serotype O3:K6 (strain RIMD 2210633).